Here is a 188-residue protein sequence, read N- to C-terminus: Phosphoribosylglycinamide formyltransferase (188 aa).

Position 12-14 (12-14) interacts with N(1)-(5-phospho-beta-D-ribosyl)glycinamide; sequence GSN. (6R)-10-formyltetrahydrofolate-binding positions include lysine 66, 91-94, and asparagine 108; that span reads MRLI. Histidine 110 acts as the Proton donor in catalysis.

Belongs to the GART family.

The enzyme catalyses N(1)-(5-phospho-beta-D-ribosyl)glycinamide + (6R)-10-formyltetrahydrofolate = N(2)-formyl-N(1)-(5-phospho-beta-D-ribosyl)glycinamide + (6S)-5,6,7,8-tetrahydrofolate + H(+). The protein operates within purine metabolism; IMP biosynthesis via de novo pathway; N(2)-formyl-N(1)-(5-phospho-D-ribosyl)glycinamide from N(1)-(5-phospho-D-ribosyl)glycinamide (10-formyl THF route): step 1/1. Functionally, catalyzes the transfer of a formyl group from 10-formyltetrahydrofolate to 5-phospho-ribosyl-glycinamide (GAR), producing 5-phospho-ribosyl-N-formylglycinamide (FGAR) and tetrahydrofolate. The polypeptide is Phosphoribosylglycinamide formyltransferase (Staphylococcus aureus (strain MSSA476)).